The following is a 219-amino-acid chain: Ribose-5-phosphate isomerase A (219 aa).

Substrate is bound by residues 28-31 (TGST), 81-84 (DGAD), and 94-97 (KGGG). Catalysis depends on glutamate 103, which acts as the Proton acceptor. Lysine 121 serves as a coordination point for substrate.

It belongs to the ribose 5-phosphate isomerase family. Homodimer.

It catalyses the reaction aldehydo-D-ribose 5-phosphate = D-ribulose 5-phosphate. It participates in carbohydrate degradation; pentose phosphate pathway; D-ribose 5-phosphate from D-ribulose 5-phosphate (non-oxidative stage): step 1/1. Its function is as follows. Catalyzes the reversible conversion of ribose-5-phosphate to ribulose 5-phosphate. This chain is Ribose-5-phosphate isomerase A, found in Shewanella oneidensis (strain ATCC 700550 / JCM 31522 / CIP 106686 / LMG 19005 / NCIMB 14063 / MR-1).